Here is a 367-residue protein sequence, read N- to C-terminus: tRNA/tmRNA (uracil-C(5))-methyltransferase (367 aa).

Residues glutamine 190, tyrosine 218, asparagine 223, glutamate 239, and aspartate 299 each coordinate S-adenosyl-L-methionine. Catalysis depends on cysteine 324, which acts as the Nucleophile. Glutamate 358 functions as the Proton acceptor in the catalytic mechanism.

Belongs to the class I-like SAM-binding methyltransferase superfamily. RNA M5U methyltransferase family. TrmA subfamily.

It catalyses the reaction uridine(54) in tRNA + S-adenosyl-L-methionine = 5-methyluridine(54) in tRNA + S-adenosyl-L-homocysteine + H(+). The enzyme catalyses uridine(341) in tmRNA + S-adenosyl-L-methionine = 5-methyluridine(341) in tmRNA + S-adenosyl-L-homocysteine + H(+). In terms of biological role, dual-specificity methyltransferase that catalyzes the formation of 5-methyluridine at position 54 (m5U54) in all tRNAs, and that of position 341 (m5U341) in tmRNA (transfer-mRNA). The protein is tRNA/tmRNA (uracil-C(5))-methyltransferase of Erwinia tasmaniensis (strain DSM 17950 / CFBP 7177 / CIP 109463 / NCPPB 4357 / Et1/99).